The primary structure comprises 196 residues: Phosphoheptose isomerase (196 aa).

One can recognise an SIS domain in the interval 36 to 196; that stretch reads MTNCLINGGK…GIDALLLGVE (161 aa). 51 to 53 is a binding site for substrate; the sequence is NGG. The Zn(2+) site is built by H60 and E64. Substrate is bound by residues E64, 93–94, 119–121, S124, and Q174; these read ND and STS. Residues Q174 and H182 each contribute to the Zn(2+) site.

It belongs to the SIS family. GmhA subfamily. Homotetramer. Zn(2+) is required as a cofactor.

It localises to the cytoplasm. It catalyses the reaction 2 D-sedoheptulose 7-phosphate = D-glycero-alpha-D-manno-heptose 7-phosphate + D-glycero-beta-D-manno-heptose 7-phosphate. It participates in carbohydrate biosynthesis; D-glycero-D-manno-heptose 7-phosphate biosynthesis; D-glycero-alpha-D-manno-heptose 7-phosphate and D-glycero-beta-D-manno-heptose 7-phosphate from sedoheptulose 7-phosphate: step 1/1. Catalyzes the isomerization of sedoheptulose 7-phosphate in D-glycero-D-manno-heptose 7-phosphate. The polypeptide is Phosphoheptose isomerase (Dechloromonas aromatica (strain RCB)).